The chain runs to 585 residues: Putative lipase ATG15 (585 aa).

Residues Met1–Ala21 traverse the membrane as a helical; Signal-anchor for type II membrane protein segment. Residues Thr22–Pro585 lie on the Lumenal side of the membrane. N-linked (GlcNAc...) asparagine glycosylation is found at Asn171, Asn193, and Asn275. The active-site Charge relay system is the Ser291. Asn340 and Asn437 each carry an N-linked (GlcNAc...) asparagine glycan. A disordered region spans residues Thr500–Thr526.

It belongs to the AB hydrolase superfamily. Lipase family. In terms of assembly, binds to both phosphatidylinositol (PI) and phosphatidylinositol 3,5-bisphosphate (PIP2).

Its subcellular location is the endosome. It is found in the multivesicular body membrane. It localises to the prevacuolar compartment membrane. It catalyses the reaction a triacylglycerol + H2O = a diacylglycerol + a fatty acid + H(+). Its function is as follows. Lipase which is essential for lysis of subvacuolar cytoplasm to vacuole targeted bodies and intravacuolar autophagic bodies. Involved in the lysis of intravacuolar multivesicular body (MVB) vesicles. The intravacuolar membrane disintegration by ATG15 is critical to life span extension. In Ajellomyces capsulatus (strain NAm1 / WU24) (Darling's disease fungus), this protein is Putative lipase ATG15 (ATG15).